Consider the following 56-residue polypeptide: Small ribosomal subunit protein uS14 (56 aa).

Residues C21, C24, C39, and C42 each coordinate Zn(2+).

The protein belongs to the universal ribosomal protein uS14 family. In terms of assembly, component of the 40S small ribosomal subunit. Requires Zn(2+) as cofactor.

Its subcellular location is the cytoplasm. The protein localises to the cytosol. It is found in the rough endoplasmic reticulum. The sequence is that of Small ribosomal subunit protein uS14 (RpS29) from Scarabaeus laticollis (Scarab dung beetle).